The chain runs to 91 residues: Small ribosomal subunit protein uS15 (91 aa).

It belongs to the universal ribosomal protein uS15 family. In terms of assembly, part of the 30S ribosomal subunit. Forms a bridge to the 50S subunit in the 70S ribosome, contacting the 23S rRNA.

Its function is as follows. One of the primary rRNA binding proteins, it binds directly to 16S rRNA where it helps nucleate assembly of the platform of the 30S subunit by binding and bridging several RNA helices of the 16S rRNA. Forms an intersubunit bridge (bridge B4) with the 23S rRNA of the 50S subunit in the ribosome. The sequence is that of Small ribosomal subunit protein uS15 from Synechococcus sp. (strain JA-3-3Ab) (Cyanobacteria bacterium Yellowstone A-Prime).